A 544-amino-acid chain; its full sequence is Protein angel homolog 2 (544 aa).

The protein belongs to the CCR4/nocturin family.

The polypeptide is Protein angel homolog 2 (Angel2) (Mus musculus (Mouse)).